Reading from the N-terminus, the 578-residue chain is Proline--tRNA ligase (578 aa).

It belongs to the class-II aminoacyl-tRNA synthetase family. ProS type 1 subfamily. As to quaternary structure, homodimer.

It is found in the cytoplasm. It carries out the reaction tRNA(Pro) + L-proline + ATP = L-prolyl-tRNA(Pro) + AMP + diphosphate. Functionally, catalyzes the attachment of proline to tRNA(Pro) in a two-step reaction: proline is first activated by ATP to form Pro-AMP and then transferred to the acceptor end of tRNA(Pro). As ProRS can inadvertently accommodate and process non-cognate amino acids such as alanine and cysteine, to avoid such errors it has two additional distinct editing activities against alanine. One activity is designated as 'pretransfer' editing and involves the tRNA(Pro)-independent hydrolysis of activated Ala-AMP. The other activity is designated 'posttransfer' editing and involves deacylation of mischarged Ala-tRNA(Pro). The misacylated Cys-tRNA(Pro) is not edited by ProRS. The polypeptide is Proline--tRNA ligase (Burkholderia lata (strain ATCC 17760 / DSM 23089 / LMG 22485 / NCIMB 9086 / R18194 / 383)).